A 505-amino-acid chain; its full sequence is Phase 1 flagellin (505 aa).

Belongs to the bacterial flagellin family.

The protein localises to the secreted. It localises to the bacterial flagellum. Flagellin is the subunit protein which polymerizes to form the filaments of bacterial flagella. The sequence is that of Phase 1 flagellin (fliC) from Salmonella naestved.